The chain runs to 344 residues: Phenylalanine--tRNA ligase alpha subunit (344 aa).

E256 is a binding site for Mg(2+).

It belongs to the class-II aminoacyl-tRNA synthetase family. Phe-tRNA synthetase alpha subunit type 1 subfamily. As to quaternary structure, tetramer of two alpha and two beta subunits. It depends on Mg(2+) as a cofactor.

Its subcellular location is the cytoplasm. It carries out the reaction tRNA(Phe) + L-phenylalanine + ATP = L-phenylalanyl-tRNA(Phe) + AMP + diphosphate + H(+). The polypeptide is Phenylalanine--tRNA ligase alpha subunit (Onion yellows phytoplasma (strain OY-M)).